A 548-amino-acid polypeptide reads, in one-letter code: Chaperonin GroEL (548 aa).

ATP contacts are provided by residues 30 to 33 (TLGP), K51, 87 to 91 (DGTTT), G415, 479 to 481 (NAA), and D495.

This sequence belongs to the chaperonin (HSP60) family. In terms of assembly, forms a cylinder of 14 subunits composed of two heptameric rings stacked back-to-back. Interacts with the co-chaperonin GroES.

The protein resides in the cytoplasm. The catalysed reaction is ATP + H2O + a folded polypeptide = ADP + phosphate + an unfolded polypeptide.. Functionally, together with its co-chaperonin GroES, plays an essential role in assisting protein folding. The GroEL-GroES system forms a nano-cage that allows encapsulation of the non-native substrate proteins and provides a physical environment optimized to promote and accelerate protein folding. The polypeptide is Chaperonin GroEL (Escherichia fergusonii (strain ATCC 35469 / DSM 13698 / CCUG 18766 / IAM 14443 / JCM 21226 / LMG 7866 / NBRC 102419 / NCTC 12128 / CDC 0568-73)).